Reading from the N-terminus, the 153-residue chain is Interleukin-4 (153 aa).

Residues 1-24 form the signal peptide; the sequence is MGLTSQLLPPLFFLLACAGNFVHG. 3 cysteine pairs are disulfide-bonded: cysteine 27–cysteine 151, cysteine 48–cysteine 89, and cysteine 70–cysteine 123. An N-linked (GlcNAc...) asparagine glycan is attached at asparagine 62.

This sequence belongs to the IL-4/IL-13 family. In terms of assembly, interacts with IL4R. Interacts with IL13RA1.

The protein localises to the secreted. In terms of biological role, cytokine secreted primarily by mast cells, T-cells, eosinophils, and basophils that plays a role in regulating antibody production, hematopoiesis and inflammation, and the development of effector T-cell responses. Induces the expression of class II MHC molecules on resting B-cells. Enhances both secretion and cell surface expression of IgE and IgG1. Also regulates the expression of the low affinity Fc receptor for IgE (CD23) on both lymphocytes and monocytes. Positively regulates IL31RA expression in macrophages. Stimulates autophagy in dendritic cells by interfering with mTORC1 signaling and through the induction of RUFY4. In addition, plays a critical role in higher functions of the normal brain, such as memory and learning. Upon binding to IL4, IL4R receptor dimerizes either with the common IL2R gamma chain/IL2RG to produce the type 1 signaling complex, located mainly on hematopoietic cells, or with the IL13RA1 to produce the type 2 complex, which is also expressed on nonhematopoietic cells. Engagement of both types of receptors initiates JAK3 and to a lower extend JAK1 phosphorylation leading to activation of the signal transducer and activator of transcription 6/STAT6. This Homo sapiens (Human) protein is Interleukin-4 (IL4).